Consider the following 476-residue polypeptide: Chromosomal replication initiator protein DnaA (476 aa).

The domain I, interacts with DnaA modulators stretch occupies residues 1–75 (MLAPDTFWLA…TQMAENHFAR (75 aa)). Residues 75 to 139 (RPVQLQLELA…AKEKQEKNPT (65 aa)) form a domain II region. Residues 110-141 (FDAPTESAQKAPKDTKDTKDAKEKQEKNPTRL) form a disordered region. The span at 120 to 138 (APKDTKDTKDAKEKQEKNP) shows a compositional bias: basic and acidic residues. Residues 140–356 (RLNPSFTFNT…GALKRVVAYS (217 aa)) form a domain III, AAA+ region region. ATP contacts are provided by glycine 184, glycine 186, lysine 187, and threonine 188. The tract at residues 357–476 (RFTGHALTLD…FNTLLHILRG (120 aa)) is domain IV, binds dsDNA.

Belongs to the DnaA family. Oligomerizes as a right-handed, spiral filament on DNA at oriC.

Its subcellular location is the cytoplasm. Its function is as follows. Plays an essential role in the initiation and regulation of chromosomal replication. ATP-DnaA binds to the origin of replication (oriC) to initiate formation of the DNA replication initiation complex once per cell cycle. Binds the DnaA box (a 9 base pair repeat at the origin) and separates the double-stranded (ds)DNA. Forms a right-handed helical filament on oriC DNA; dsDNA binds to the exterior of the filament while single-stranded (ss)DNA is stabiized in the filament's interior. The ATP-DnaA-oriC complex binds and stabilizes one strand of the AT-rich DNA unwinding element (DUE), permitting loading of DNA polymerase. After initiation quickly degrades to an ADP-DnaA complex that is not apt for DNA replication. Binds acidic phospholipids. The sequence is that of Chromosomal replication initiator protein DnaA from Nitrosospira multiformis (strain ATCC 25196 / NCIMB 11849 / C 71).